We begin with the raw amino-acid sequence, 219 residues long: Izumo sperm-egg fusion protein 4 (219 aa).

Positions 1 to 15 (MALLLCLVGVTAALA) are cleaved as a signal peptide. The N-linked (GlcNAc...) asparagine glycan is linked to asparagine 206.

The protein belongs to the Izumo family.

It localises to the secreted. The protein is Izumo sperm-egg fusion protein 4 (IZUMO4) of Macaca fascicularis (Crab-eating macaque).